Consider the following 503-residue polypeptide: Lanosterol 14-alpha demethylase (503 aa).

A helical transmembrane segment spans residues 24-44; sequence GNLLSTLLIACAFTLSLVYLF. Cys449 contacts heme.

It belongs to the cytochrome P450 family. Heme is required as a cofactor. Post-translationally, ubiquitinated by MARCHF6, leading to proteasomal degradation.

It localises to the endoplasmic reticulum membrane. Its subcellular location is the microsome membrane. The catalysed reaction is a 14alpha-methyl steroid + 3 reduced [NADPH--hemoprotein reductase] + 3 O2 = a Delta(14) steroid + formate + 3 oxidized [NADPH--hemoprotein reductase] + 4 H2O + 4 H(+). The enzyme catalyses lanosterol + 3 reduced [NADPH--hemoprotein reductase] + 3 O2 = 4,4-dimethyl-5alpha-cholesta-8,14,24-trien-3beta-ol + formate + 3 oxidized [NADPH--hemoprotein reductase] + 4 H2O + 4 H(+). It carries out the reaction 24,25-dihydrolanosterol + 3 reduced [NADPH--hemoprotein reductase] + 3 O2 = 4,4-dimethyl-8,14-cholestadien-3beta-ol + formate + 3 oxidized [NADPH--hemoprotein reductase] + 4 H2O + 4 H(+). It catalyses the reaction a 14alpha-methyl steroid + reduced [NADPH--hemoprotein reductase] + O2 = a 14alpha-hydroxymethyl steroid + oxidized [NADPH--hemoprotein reductase] + H2O + H(+). The catalysed reaction is a 14alpha-hydroxymethyl steroid + reduced [NADPH--hemoprotein reductase] + O2 = a 14alpha-formyl steroid + oxidized [NADPH--hemoprotein reductase] + 2 H2O + H(+). The enzyme catalyses a 14alpha-formyl steroid + reduced [NADPH--hemoprotein reductase] + O2 = a Delta(14) steroid + formate + oxidized [NADPH--hemoprotein reductase] + H2O + 2 H(+). It carries out the reaction lanosterol + reduced [NADPH--hemoprotein reductase] + O2 = 32-hydroxylanosterol + oxidized [NADPH--hemoprotein reductase] + H2O + H(+). It catalyses the reaction 32-hydroxylanosterol + reduced [NADPH--hemoprotein reductase] + O2 = 32-oxolanosterol + oxidized [NADPH--hemoprotein reductase] + 2 H2O + H(+). The catalysed reaction is 32-oxolanosterol + reduced [NADPH--hemoprotein reductase] + O2 = 4,4-dimethyl-5alpha-cholesta-8,14,24-trien-3beta-ol + formate + oxidized [NADPH--hemoprotein reductase] + H2O + 2 H(+). The enzyme catalyses 24,25-dihydrolanosterol + reduced [NADPH--hemoprotein reductase] + O2 = 32-hydroxy-24,25-dihydrolanosterol + oxidized [NADPH--hemoprotein reductase] + H2O + H(+). It carries out the reaction 32-hydroxy-24,25-dihydrolanosterol + reduced [NADPH--hemoprotein reductase] + O2 = 32-oxo-24,25-dihydrolanosterol + oxidized [NADPH--hemoprotein reductase] + 2 H2O + H(+). It catalyses the reaction 32-oxo-24,25-dihydrolanosterol + reduced [NADPH--hemoprotein reductase] + O2 = 4,4-dimethyl-8,14-cholestadien-3beta-ol + formate + oxidized [NADPH--hemoprotein reductase] + H2O + 2 H(+). Its pathway is steroid biosynthesis; zymosterol biosynthesis; zymosterol from lanosterol: step 1/6. Its activity is regulated as follows. Inhibited by azalanstat. Inhibited by azole antifungal agents ketoconazole, itraconazole and fluconazole. Its function is as follows. Sterol 14alpha-demethylase that plays a critical role in the cholesterol biosynthesis pathway, being cholesterol the major sterol component in mammalian membranes as well as a precursor for bile acid and steroid hormone synthesis. Cytochrome P450 monooxygenase that catalyzes the three-step oxidative removal of the 14alpha-methyl group (C-32) of sterols such as lanosterol (lanosta-8,24-dien-3beta-ol) and 24,25-dihydrolanosterol (DHL) in the form of formate, and converts the sterols to 4,4-dimethyl-5alpha-cholesta-8,14,24-trien-3beta-ol and 4,4-dimethyl-8,14-cholestadien-3beta-ol, respectively, which are intermediates of cholesterol biosynthesis. Can also demethylate substrates not intrinsic to mammals, such as eburicol (24-methylene-24,25-dihydrolanosterol), but at a lower rate than DHL. The chain is Lanosterol 14-alpha demethylase from Mus musculus (Mouse).